The following is a 105-amino-acid chain: Urease subunit beta (105 aa).

This sequence belongs to the urease beta subunit family. Heterotrimer of UreA (gamma), UreB (beta) and UreC (alpha) subunits. Three heterotrimers associate to form the active enzyme.

The protein localises to the cytoplasm. The enzyme catalyses urea + 2 H2O + H(+) = hydrogencarbonate + 2 NH4(+). It participates in nitrogen metabolism; urea degradation; CO(2) and NH(3) from urea (urease route): step 1/1. This chain is Urease subunit beta, found in Pseudomonas putida (strain GB-1).